A 181-amino-acid polypeptide reads, in one-letter code: Transcription termination/antitermination protein NusG (181 aa).

Residues 130–161 form the KOW domain; the sequence is PGEMVRVNDGPFADFNGVVEEVDYEKSRLKVS.

Belongs to the NusG family. In terms of assembly, monomer. Interacts with the transcription termination factor Rho and with RNA polymerase.

Its function is as follows. Participates in transcription elongation, termination and antitermination. In the absence of Rho, increases the rate of transcription elongation by the RNA polymerase (RNAP), probably by partially suppressing pausing. In the presence of Rho, modulates most Rho-dependent termination events by interacting with the RNAP to render the complex more susceptible to the termination activity of Rho. May be required to overcome a kinetic limitation of Rho to function at certain terminators. Also involved in ribosomal RNA transcriptional antitermination. The polypeptide is Transcription termination/antitermination protein NusG (Salmonella typhi).